The chain runs to 1036 residues: Isoleucine--tRNA ligase (1036 aa).

A 'HIGH' region motif is present at residues 46-56; it reads PFATGLPHYGH. The 'KMSKS' region signature appears at 589–593; sequence KMSKR. Residue Lys-592 coordinates ATP.

Belongs to the class-I aminoacyl-tRNA synthetase family. IleS type 2 subfamily. As to quaternary structure, monomer. Zn(2+) serves as cofactor.

The protein localises to the cytoplasm. The enzyme catalyses tRNA(Ile) + L-isoleucine + ATP = L-isoleucyl-tRNA(Ile) + AMP + diphosphate. Functionally, catalyzes the attachment of isoleucine to tRNA(Ile). As IleRS can inadvertently accommodate and process structurally similar amino acids such as valine, to avoid such errors it has two additional distinct tRNA(Ile)-dependent editing activities. One activity is designated as 'pretransfer' editing and involves the hydrolysis of activated Val-AMP. The other activity is designated 'posttransfer' editing and involves deacylation of mischarged Val-tRNA(Ile). This Chlamydia trachomatis serovar A (strain ATCC VR-571B / DSM 19440 / HAR-13) protein is Isoleucine--tRNA ligase.